The following is a 350-amino-acid chain: Small ribosomal subunit biogenesis GTPase RsgA (350 aa).

The segment at 1 to 30 (MSKRKLTQNQQRRIQSNNAKTLHRHQHRHK) is disordered. A compositionally biased stretch (polar residues) spans 7–20 (TQNQQRRIQSNNAK). A compositionally biased stretch (basic residues) spans 21-30 (TLHRHQHRHK). The CP-type G domain occupies 106 to 274 (HNQIVRPDYY…LIDSPGIREF (169 aa)). Residues 162–165 (NKAD) and 216–224 (GQSGVGKSS) each bind GTP. Residues cysteine 298, cysteine 303, histidine 305, and cysteine 311 each coordinate Zn(2+).

It belongs to the TRAFAC class YlqF/YawG GTPase family. RsgA subfamily. In terms of assembly, monomer. Associates with 30S ribosomal subunit, binds 16S rRNA. Zn(2+) is required as a cofactor.

The protein resides in the cytoplasm. Functionally, one of several proteins that assist in the late maturation steps of the functional core of the 30S ribosomal subunit. Helps release RbfA from mature subunits. May play a role in the assembly of ribosomal proteins into the subunit. Circularly permuted GTPase that catalyzes slow GTP hydrolysis, GTPase activity is stimulated by the 30S ribosomal subunit. The sequence is that of Small ribosomal subunit biogenesis GTPase RsgA from Histophilus somni (strain 129Pt) (Haemophilus somnus).